Reading from the N-terminus, the 445-residue chain is ATP-dependent protease ATPase subunit HslU (445 aa).

Residues I18, 60–65, D258, E323, and R395 contribute to the ATP site; that span reads GVGKTE.

This sequence belongs to the ClpX chaperone family. HslU subfamily. A double ring-shaped homohexamer of HslV is capped on each side by a ring-shaped HslU homohexamer. The assembly of the HslU/HslV complex is dependent on binding of ATP.

The protein resides in the cytoplasm. ATPase subunit of a proteasome-like degradation complex; this subunit has chaperone activity. The binding of ATP and its subsequent hydrolysis by HslU are essential for unfolding of protein substrates subsequently hydrolyzed by HslV. HslU recognizes the N-terminal part of its protein substrates and unfolds these before they are guided to HslV for hydrolysis. The polypeptide is ATP-dependent protease ATPase subunit HslU (Syntrophotalea carbinolica (strain DSM 2380 / NBRC 103641 / GraBd1) (Pelobacter carbinolicus)).